The sequence spans 325 residues: NADH-quinone oxidoreductase subunit H (325 aa).

The next 9 helical transmembrane spans lie at 11–31, 50–69, 81–101, 114–134, 154–174, 186–206, 237–257, 265–285, and 304–324; these read ILLSILKAVVILLVVVTCGAF, NRVGWGGSLQLVADMIKMFF, VIFTLAPMIAFTSLLLAFAIV, IGILFFLMMAGLAVYAVLFAG, LSYEVFLGLSLMGVVAQAGSF, IWNVIPQFFGFVTFAIAGVAV, FFVGEYIGIVTISALMVTLFF, LPPFIWFALKTAFFMMMFILI, and VCLPLTLINLLVTAAVILWQA.

This sequence belongs to the complex I subunit 1 family. NDH-1 is composed of 13 different subunits. Subunits NuoA, H, J, K, L, M, N constitute the membrane sector of the complex.

It localises to the cell inner membrane. It carries out the reaction a quinone + NADH + 5 H(+)(in) = a quinol + NAD(+) + 4 H(+)(out). In terms of biological role, NDH-1 shuttles electrons from NADH, via FMN and iron-sulfur (Fe-S) centers, to quinones in the respiratory chain. The immediate electron acceptor for the enzyme in this species is believed to be ubiquinone. Couples the redox reaction to proton translocation (for every two electrons transferred, four hydrogen ions are translocated across the cytoplasmic membrane), and thus conserves the redox energy in a proton gradient. This subunit may bind ubiquinone. The protein is NADH-quinone oxidoreductase subunit H of Citrobacter koseri (strain ATCC BAA-895 / CDC 4225-83 / SGSC4696).